The chain runs to 152 residues: Deoxyuridine 5'-triphosphate nucleotidohydrolase (152 aa).

Residues 71-73, Asn-84, 88-90, and Met-98 contribute to the substrate site; these read RSG and LID.

This sequence belongs to the dUTPase family. In terms of assembly, homotrimer. The cofactor is Mg(2+).

It carries out the reaction dUTP + H2O = dUMP + diphosphate + H(+). The protein operates within pyrimidine metabolism; dUMP biosynthesis; dUMP from dCTP (dUTP route): step 2/2. Functionally, this enzyme is involved in nucleotide metabolism: it produces dUMP, the immediate precursor of thymidine nucleotides and it decreases the intracellular concentration of dUTP so that uracil cannot be incorporated into DNA. The protein is Deoxyuridine 5'-triphosphate nucleotidohydrolase of Escherichia coli O157:H7.